The following is a 260-amino-acid chain: Ribonuclease HII (260 aa).

In terms of domain architecture, RNase H type-2 spans 71–259 (ELVAGVDEVG…VHDAIVNKKN (189 aa)). Asp77, Glu78, and Asp169 together coordinate a divalent metal cation.

It belongs to the RNase HII family. It depends on Mn(2+) as a cofactor. The cofactor is Mg(2+).

It is found in the cytoplasm. The enzyme catalyses Endonucleolytic cleavage to 5'-phosphomonoester.. Its function is as follows. Endonuclease that specifically degrades the RNA of RNA-DNA hybrids. The chain is Ribonuclease HII from Leuconostoc citreum (strain KM20).